The sequence spans 332 residues: Ribosomal RNA small subunit methyltransferase H (332 aa).

S-adenosyl-L-methionine is bound by residues 39–41 (GGY), D56, F83, D100, and Q107.

Belongs to the methyltransferase superfamily. RsmH family.

It localises to the cytoplasm. The enzyme catalyses cytidine(1402) in 16S rRNA + S-adenosyl-L-methionine = N(4)-methylcytidine(1402) in 16S rRNA + S-adenosyl-L-homocysteine + H(+). Specifically methylates the N4 position of cytidine in position 1402 (C1402) of 16S rRNA. The sequence is that of Ribosomal RNA small subunit methyltransferase H from Bartonella quintana (strain Toulouse) (Rochalimaea quintana).